The sequence spans 199 residues: V-set and transmembrane domain-containing protein 5 (199 aa).

The signal sequence occupies residues 1–27 (MRPPRCVGRTQGIPLGLLAFWVATARC). Residues 28 to 146 (LQSQGVSLYI…VSEIRYEDLH (119 aa)) lie on the Extracellular side of the membrane. In terms of domain architecture, Ig-like C2-type spans 36–138 (YIPRSAINAT…QSGTILLHVS (103 aa)). N-linked (GlcNAc...) asparagine glycans are attached at residues N43, N87, and N101. Residues 147–167 (FVAVFFALLAAVAVVLISLMW) form a helical membrane-spanning segment. Residues 168–199 (VCNQCAYKFQRKRRYKLRESTTEEIEMKDVEC) are Cytoplasmic-facing. The important for CDC42-dependent filopodia induction stretch occupies residues 169-185 (CNQCAYKFQRKRRYKLR).

As to quaternary structure, can homooligomerize through cis interactions within the same cell membrane. N-glycosylated.

The protein localises to the cell membrane. It localises to the cell projection. It is found in the dendrite. Its subcellular location is the axon. Cell adhesion-like membrane protein of the central nervous system (CNS) which modulates both the position and complexity of central neurons by altering their membrane morphology and dynamics. Involved in the formation of neuronal dendrites and protrusions including dendritic filopodia. In synaptogenesis, regulates synapse formation by altering dendritic spine morphology and actin distribution. Promotes formation of unstable neuronal spines such as thin and branched types. Regulates neuronal morphogenesis and migration during cortical development in the brain. The protein is V-set and transmembrane domain-containing protein 5 (Vstm5) of Rattus norvegicus (Rat).